A 282-amino-acid polypeptide reads, in one-letter code: HTH-type transcriptional activator RhaR (282 aa).

Residues 179-277 (DKLITALANS…GMTPSQWRHL (99 aa)) form the HTH araC/xylS-type domain. 2 consecutive DNA-binding regions (H-T-H motif) follow at residues 196-217 (DAFC…RAQT) and 244-267 (ISEI…TRET).

In terms of assembly, binds DNA as a dimer.

The protein localises to the cytoplasm. Its function is as follows. Activates expression of the rhaSR operon in response to L-rhamnose. The protein is HTH-type transcriptional activator RhaR of Salmonella arizonae (strain ATCC BAA-731 / CDC346-86 / RSK2980).